The sequence spans 435 residues: Methylenetetrahydrofolate--tRNA-(uracil-5-)-methyltransferase TrmFO (435 aa).

Residue 9–14 (GAGLAG) coordinates FAD.

Belongs to the MnmG family. TrmFO subfamily. FAD is required as a cofactor.

The protein resides in the cytoplasm. The catalysed reaction is uridine(54) in tRNA + (6R)-5,10-methylene-5,6,7,8-tetrahydrofolate + NADH + H(+) = 5-methyluridine(54) in tRNA + (6S)-5,6,7,8-tetrahydrofolate + NAD(+). It catalyses the reaction uridine(54) in tRNA + (6R)-5,10-methylene-5,6,7,8-tetrahydrofolate + NADPH + H(+) = 5-methyluridine(54) in tRNA + (6S)-5,6,7,8-tetrahydrofolate + NADP(+). In terms of biological role, catalyzes the folate-dependent formation of 5-methyl-uridine at position 54 (M-5-U54) in all tRNAs. The protein is Methylenetetrahydrofolate--tRNA-(uracil-5-)-methyltransferase TrmFO of Staphylococcus saprophyticus subsp. saprophyticus (strain ATCC 15305 / DSM 20229 / NCIMB 8711 / NCTC 7292 / S-41).